The sequence spans 79 residues: Acyl carrier protein (79 aa).

The Carrier domain maps to 3-78; sequence QEILEKVRSI…DAVSYIQEKK (76 aa). An O-(pantetheine 4'-phosphoryl)serine modification is found at serine 38.

This sequence belongs to the acyl carrier protein (ACP) family. In terms of processing, 4'-phosphopantetheine is transferred from CoA to a specific serine of apo-ACP by AcpS. This modification is essential for activity because fatty acids are bound in thioester linkage to the sulfhydryl of the prosthetic group.

Its subcellular location is the cytoplasm. The protein operates within lipid metabolism; fatty acid biosynthesis. Functionally, carrier of the growing fatty acid chain in fatty acid biosynthesis. The protein is Acyl carrier protein of Synechococcus sp. (strain RCC307).